A 1289-amino-acid chain; its full sequence is Trafficking protein particle complex II-specific subunit 120 (1289 aa).

Residues 354 to 365 (STGISPVDSNSK) show a composition bias toward polar residues. The disordered stretch occupies residues 354–374 (STGISPVDSNSKATASTTASS). Phosphoserine is present on residues Ser-379 and Ser-387.

It belongs to the TRS120 family. Part of the multisubunit TRAPP (transport protein particle) II complex composed of BET3, BET5, TRS20, TRS23, TRS31, TRS33, TRS65, TRS120 and TRS130. Interacts directly with TRS65.

It is found in the golgi apparatus. Its subcellular location is the cis-Golgi network. Its function is as follows. Specific subunit of the TRAPP II complex, a highly conserved vesicle tethering complex that functions in the late Golgi as a guanine nucleotide exchanger (GEF) for the Golgi YPT1 GTPase. TRS120 plays a role in the YPT GEF activity of TRAPP II in concert with the two other TRAPP II-specific subunits TRS65 and TRS130. The polypeptide is Trafficking protein particle complex II-specific subunit 120 (TRS120) (Saccharomyces cerevisiae (strain ATCC 204508 / S288c) (Baker's yeast)).